Consider the following 397-residue polypeptide: MEIVGCRAEENTCPFRPPAMLFHGISGGHIQGIMEEMERRSKTESRLAKGGQMNGRETNMPPMSPEKPALCAGCGGKISDRYYLLAVDKQWHLRCLKCCECKLALESELTCFAKDGSIYCKEDYYRRFSVQRCARCHLGISASEMVMRARESVYHLSCFTCTTCNKTLTTGDHFGMKDNLVYCRAHFESLLQGEYPPQLSYTELAAKSGGLALPYFNGTGTVQKGRPRKRKSPALGVDIVNYNSGCNENEADHMDRDQQPYPPSQKTKRMATSFKHHQLRTMKSYFAINHNPDAKDLKQLAQKTGLTKRVLQVWFQNARAKFRRNLLRQENGGVDKADGTSLPAPPSADSGALTPPGTATTLTDLTNPTITVVTSVTSNLDSHEPGSPSQTTLTNLF.

A disordered region spans residues 40-60; it reads RSKTESRLAKGGQMNGRETNM. LIM zinc-binding domains lie at 69–130 and 131–193; these read ALCA…RFSV and QRCA…LLQG. Positions 267–326 form a DNA-binding region, homeobox; the sequence is TKRMATSFKHHQLRTMKSYFAINHNPDAKDLKQLAQKTGLTKRVLQVWFQNARAKFRRNL. Disordered regions lie at residues 330-363 and 378-397; these read ENGG…TTLT and SNLD…TNLF. The span at 353–363 shows a compositional bias: low complexity; it reads LTPPGTATTLT. Polar residues predominate over residues 387-397; it reads SPSQTTLTNLF.

The protein resides in the nucleus. In terms of biological role, may be involved in gonadal development. The protein is LIM/homeobox protein Lhx9 (LHX9) of Gallus gallus (Chicken).